We begin with the raw amino-acid sequence, 616 residues long: Glycogenin-1 (616 aa).

UDP contacts are provided by Leu10, Tyr16, and Arg95. Residues Leu10, Tyr16, Arg95, Lys104, Asp120, Asp122, Asn158, Ser159, Asp185, Asp188, and Gln189 each coordinate UDP-alpha-D-glucose. Asp120 and Asp122 together coordinate UDP. Residues Asp120 and Asp122 each contribute to the Mn(2+) site. Tyr230 carries O-linked (Glc...) tyrosine glycosylation. Positions 247, 250, and 253 each coordinate UDP. Residue His247 participates in Mn(2+) binding. Gly250 and Lys253 together coordinate UDP-alpha-D-glucose. The span at 283 to 302 (HQLNNEVSKPKISDSDKTET) shows a compositional bias: basic and acidic residues. 4 disordered regions span residues 283 to 320 (HQLN…PTTN), 335 to 354 (NQNA…NPVP), 371 to 525 (TNQP…EKDK), and 553 to 588 (RDAT…EMPN). Over residues 377–386 (ESREYSKEND) the composition is skewed to basic and acidic residues. Over residues 400-419 (SPPNSTQELNSSYSVVSTQA) the composition is skewed to polar residues. A compositionally biased stretch (low complexity) spans 450–461 (STAASSNNNVSN). Polar residues-rich tracts occupy residues 462 to 485 (QPDG…PSNP) and 492 to 503 (DNIQKPSVSTND). Positions 567–576 (DKQEDMKLTA) are enriched in basic and acidic residues. The segment covering 577-586 (EETNQPQQEM) has biased composition (polar residues). An O-linked (Glc...) tyrosine glycan is attached at Tyr598.

It belongs to the glycosyltransferase 8 family. Glycogenin subfamily. Mn(2+) is required as a cofactor.

It is found in the cytoplasm. The protein resides in the vacuole. It catalyses the reaction L-tyrosyl-[glycogenin] + UDP-alpha-D-glucose = alpha-D-glucosyl-L-tyrosyl-[glycogenin] + UDP + H(+). The enzyme catalyses [1,4-alpha-D-glucosyl](n)-L-tyrosyl-[glycogenin] + UDP-alpha-D-glucose = [1,4-alpha-D-glucosyl](n+1)-L-tyrosyl-[glycogenin] + UDP + H(+). Its function is as follows. Self-glucosylating initiator of glycogen synthesis. It catalyzes the formation of a short alpha (1,4)-glucosyl chain covalently attached via a glucose 1-O-tyrosyl linkage to internal tyrosine residues and these chains act as primers for the elongation reaction catalyzed by glycogen synthase. Capable of transferring glucosyl residues to unbound acceptors such as free oligoglucans or oligoglucan derivatives. This chain is Glycogenin-1, found in Saccharomyces cerevisiae (strain ATCC 204508 / S288c) (Baker's yeast).